Consider the following 1195-residue polypeptide: EST/SMG-like protein 2 (1195 aa).

3 stretches are compositionally biased toward polar residues: residues 1–10 (MPETSVQNPL), 18–35 (TRSM…SATP), and 55–68 (VLNP…SNSV). Disordered stretches follow at residues 1-38 (MPET…PSFP), 55-130 (VLNP…VGIT), 179-268 (SKSE…PASN), and 610-643 (DKKE…DEIM). 2 stretches are compositionally biased toward basic and acidic residues: residues 83–109 (RFSD…EKNP) and 197–208 (INDKDNSARDQD). Low complexity-rich tracts occupy residues 210–252 (NNSG…NNSD) and 619–629 (NNDSSVTESST). Positions 1025-1164 (TYFVFDATSW…LISDDDAMKK (140 aa)) constitute a PINc domain.

In terms of assembly, transiently interacts with PEX14.

The protein resides in the cytoplasm. It is found in the nucleus. It localises to the peroxisome. Functionally, may be involved in the regulation of gene expression responses of environment-sensing pathways. The protein is EST/SMG-like protein 2 of Saccharomyces cerevisiae (strain ATCC 204508 / S288c) (Baker's yeast).